A 29-amino-acid polypeptide reads, in one-letter code: Cyclotide mden-F (29 aa).

Residues 1 to 29 constitute a cross-link (cyclopeptide (Gly-Asn)); the sequence is GLPICGETCFFGKCNTPKCTCINPICYKN. 3 disulfide bridges follow: cysteine 5-cysteine 19, cysteine 9-cysteine 21, and cysteine 14-cysteine 26.

The protein belongs to the cyclotide family. Post-translationally, this is a cyclic peptide.

In terms of biological role, probably participates in a plant defense mechanism. The protein is Cyclotide mden-F of Melicytus dentatus (Tree violet).